The following is a 567-amino-acid chain: Cytochrome P450 monooxygenase 79 (567 aa).

Residues 7–24 (ELAILAIVLLVTAVVFYT) traverse the membrane as a helical segment. Asn223 and Asn279 each carry an N-linked (GlcNAc...) asparagine glycan. Cys475 contributes to the heme binding site.

Belongs to the cytochrome P450 family. The cofactor is heme.

The protein resides in the membrane. It functions in the pathway secondary metabolite biosynthesis. In terms of biological role, cytochrome P450 monooxygenase that is able to use dehydroabietic acid as a substrate for oxidation. The sequence is that of Cytochrome P450 monooxygenase 79 from Postia placenta (strain ATCC 44394 / Madison 698-R) (Brown rot fungus).